Reading from the N-terminus, the 155-residue chain is Gas vesicle protein K (155 aa).

The protein belongs to the gas vesicle GvpK family.

It is found in the gas vesicle. Might be involved in nucleating gas vesicle formation. Gas vesicles (GV) are hollow, gas filled proteinaceous nanostructures. During planktonic growth they allow positioning of the organism at a favorable depth for light or nutrient acquisition. This chain is Gas vesicle protein K, found in Dolichospermum flosaquae (Anabaena flos-aquae).